Here is a 1484-residue protein sequence, read N- to C-terminus: Ral GTPase-activating protein subunit beta (1484 aa).

Disordered stretches follow at residues 355–437 (PRSD…APRR) and 699–728 (ENNL…PDSE). Ser359 is subject to Phosphoserine. Thr363 and Thr379 each carry phosphothreonine. Polar residues-rich tracts occupy residues 369–381 (SMPQ…TTPP), 392–428 (NKAT…TSSE), and 701–725 (NLKS…PTTP). Residues Ser421 and Ser710 each carry the phosphoserine modification. Position 724 is a phosphothreonine (Thr724). Positions 1138–1382 (IGYLDLLPCR…TTLEKEVPVI (245 aa)) constitute a Rap-GAP domain. Ser1275 bears the Phosphoserine mark. Residues 1297-1325 (PNHTDSLNSSQRLSPSSRMKKLPQGRPVP) are disordered. Over residues 1302-1313 (SLNSSQRLSPSS) the composition is skewed to low complexity.

As to quaternary structure, component of the heterodimeric RalGAP1 complex with RALGAPA1 and of the heterodimeric RalGAP2 complex with RALGAPA2. Heterodimerization is required for activity. In terms of tissue distribution, abundantly expressed in testis, pancreas, lung, thymus, brown fat, and white fat. Expressed at lower levels in the brain.

Its function is as follows. Non-catalytic subunit of the heterodimeric RalGAP1 and RalGAP2 complexes which act as GTPase activators for the Ras-like small GTPases RALA and RALB. The protein is Ral GTPase-activating protein subunit beta (Ralgapb) of Mus musculus (Mouse).